Consider the following 465-residue polypeptide: Iron-sulfur cluster assembly SufBD family protein SAR0880 (465 aa).

Belongs to the iron-sulfur cluster assembly SufBD family.

This Staphylococcus aureus (strain MRSA252) protein is Iron-sulfur cluster assembly SufBD family protein SAR0880.